Consider the following 383-residue polypeptide: Acetylornithine deacetylase (383 aa).

His-80 serves as a coordination point for Zn(2+). Asp-82 is a catalytic residue. Asp-112 serves as a coordination point for Zn(2+). Glu-144 is an active-site residue. Residues Glu-145, Glu-169, and His-355 each contribute to the Zn(2+) site.

Belongs to the peptidase M20A family. ArgE subfamily. Homodimer. Zn(2+) serves as cofactor. Co(2+) is required as a cofactor. The cofactor is glutathione.

It is found in the cytoplasm. It catalyses the reaction N(2)-acetyl-L-ornithine + H2O = L-ornithine + acetate. It functions in the pathway amino-acid biosynthesis; L-arginine biosynthesis; L-ornithine from N(2)-acetyl-L-ornithine (linear): step 1/1. In terms of biological role, catalyzes the hydrolysis of the amide bond of N(2)-acetylated L-amino acids. Cleaves the acetyl group from N-acetyl-L-ornithine to form L-ornithine, an intermediate in L-arginine biosynthesis pathway, and a branchpoint in the synthesis of polyamines. In Escherichia coli O17:K52:H18 (strain UMN026 / ExPEC), this protein is Acetylornithine deacetylase.